The chain runs to 454 residues: tRNA modification GTPase MnmE (454 aa).

R23, E80, and K120 together coordinate (6S)-5-formyl-5,6,7,8-tetrahydrofolate. In terms of domain architecture, TrmE-type G spans 216–377; that stretch reads GMKVVIAGRP…LRNHLKQSMG (162 aa). N226 is a binding site for K(+). Residues 226–231, 245–251, 270–273, 335–338, and 358–360 each bind GTP; these read NAGKSS, TDIAGTT, DTAG, NKAD, and SAR. S230 contributes to the Mg(2+) binding site. K(+)-binding residues include T245, I247, and T250. Position 251 (T251) interacts with Mg(2+). K454 contributes to the (6S)-5-formyl-5,6,7,8-tetrahydrofolate binding site.

Belongs to the TRAFAC class TrmE-Era-EngA-EngB-Septin-like GTPase superfamily. TrmE GTPase family. As to quaternary structure, homodimer. Heterotetramer of two MnmE and two MnmG subunits. The cofactor is K(+).

The protein resides in the cytoplasm. Its function is as follows. Exhibits a very high intrinsic GTPase hydrolysis rate. Involved in the addition of a carboxymethylaminomethyl (cmnm) group at the wobble position (U34) of certain tRNAs, forming tRNA-cmnm(5)s(2)U34. This chain is tRNA modification GTPase MnmE, found in Escherichia coli (strain 55989 / EAEC).